The primary structure comprises 78 residues: Defensin beta 136 (78 aa).

Residues 1-21 (MNLCLSALLFFLVILLPSGKG) form the signal peptide. 3 disulfides stabilise this stretch: C33/C60, C40/C54, and C44/C61.

The protein belongs to the beta-defensin family.

Its subcellular location is the secreted. Its function is as follows. Host defense peptide that exhibits antibacterial and antifungal activity. Exhibits antimicrobial activity against E.coli, S.aureus and C.albicans (in vitro). Has high lipopolysaccharide (LPS)-binding affinity, and may thereby be involved in immunoregulation through LPS neutralization. The chain is Defensin beta 136 (DEFB136) from Homo sapiens (Human).